A 177-amino-acid polypeptide reads, in one-letter code: Large ribosomal subunit protein uL6 (177 aa).

This sequence belongs to the universal ribosomal protein uL6 family. Part of the 50S ribosomal subunit.

Its function is as follows. This protein binds to the 23S rRNA, and is important in its secondary structure. It is located near the subunit interface in the base of the L7/L12 stalk, and near the tRNA binding site of the peptidyltransferase center. The protein is Large ribosomal subunit protein uL6 of Dinoroseobacter shibae (strain DSM 16493 / NCIMB 14021 / DFL 12).